We begin with the raw amino-acid sequence, 504 residues long: L-carnitine/gamma-butyrobetaine antiporter (504 aa).

A run of 12 helical transmembrane segments spans residues 10–30 (IEPK…WLTV), 51–71 (WGWA…WLVF), 92–112 (IFMM…SIEI), 143–163 (GPLP…FFFV), 195–215 (FYLV…TPLV), 231–251 (LDAI…ACGL), 263–283 (SYLS…SFIM), 316–336 (WTVF…IFLA), 347–367 (LCFG…TVLG), 398–418 (WAAL…CFIA), 446–466 (LLVR…LLAL), and 475–495 (AIIA…LSFI).

Belongs to the BCCT transporter (TC 2.A.15) family. CaiT subfamily. As to quaternary structure, homotrimer.

Its subcellular location is the cell inner membrane. It catalyses the reaction 4-(trimethylamino)butanoate(in) + (R)-carnitine(out) = 4-(trimethylamino)butanoate(out) + (R)-carnitine(in). It participates in amine and polyamine metabolism; carnitine metabolism. Catalyzes the exchange of L-carnitine for gamma-butyrobetaine. The polypeptide is L-carnitine/gamma-butyrobetaine antiporter (Escherichia coli O81 (strain ED1a)).